The chain runs to 444 residues: Nuclear distribution protein nudF (444 aa).

One can recognise a LisH domain in the interval 9 to 41 (QAEALHKAMLAYLSVINAPQTAETLREELHFDE). Residues 60–88 (TGIARLQRRINDLEAEVRSLQAELEASPS) are a coiled coil. Residues 83-107 (LEASPSAARAKNQDPTNWLPKPSST) form a disordered region. WD repeat units lie at residues 112–153 (SHRD…RTLK), 155–195 (HIRG…ANIR), 199–239 (GHDH…CVKV), 243–282 (ATES…PKAA), 285–345 (GHEN…IKTL), 347–386 (GHDN…RLVK), and 391–437 (AHEH…GCAD).

The protein belongs to the WD repeat LIS1/nudF family. As to quaternary structure, interacts with dynein. Self-associates. Interacts with bnfA, nudC and nudE.

The protein resides in the cytoplasm. It localises to the cytoskeleton. The protein localises to the spindle pole. Positively regulates the activity of the minus-end directed microtubule motor protein dynein. May enhance dynein-mediated microtubule sliding by targeting dynein to the microtubule plus end. Required for nuclear migration during vegetative growth as well as development. Required for retrograde early endosome (EE) transport from the hyphal tip. Required for localization of dynein to the mitotic spindle poles. Recruits additional proteins to the dynein complex at SPBs. The sequence is that of Nuclear distribution protein nudF from Emericella nidulans (strain FGSC A4 / ATCC 38163 / CBS 112.46 / NRRL 194 / M139) (Aspergillus nidulans).